We begin with the raw amino-acid sequence, 343 residues long: L-threonine 3-dehydrogenase (343 aa).

Cysteine 38 serves as a coordination point for Zn(2+). Catalysis depends on charge relay system residues threonine 40 and histidine 43. Zn(2+)-binding residues include histidine 63, glutamate 64, cysteine 93, cysteine 96, cysteine 99, and cysteine 107. NAD(+) is bound by residues isoleucine 175, aspartate 195, arginine 200, 262–264 (LGI), and 286–287 (IY).

It belongs to the zinc-containing alcohol dehydrogenase family. In terms of assembly, homotetramer. The cofactor is Zn(2+).

The protein resides in the cytoplasm. It catalyses the reaction L-threonine + NAD(+) = (2S)-2-amino-3-oxobutanoate + NADH + H(+). Its pathway is amino-acid degradation; L-threonine degradation via oxydo-reductase pathway; glycine from L-threonine: step 1/2. Functionally, catalyzes the NAD(+)-dependent oxidation of L-threonine to 2-amino-3-ketobutyrate. This Burkholderia mallei (strain NCTC 10247) protein is L-threonine 3-dehydrogenase.